Here is a 168-residue protein sequence, read N- to C-terminus: Profilin-3 (168 aa).

The interval 14 to 36 (LSLEHSDKPQRRSRAKVKKKKKT) is disordered. Residues 24-36 (RRSRAKVKKKKKT) show a composition bias toward basic residues.

The protein belongs to the profilin family. In terms of assembly, occurs in many kinds of cells as a complex with monomeric actin in a 1:1 ratio. Binding to the poly-proline motif of formins induces formation of oligomers through the N-terminal hydrophobic residues of PRF3. As to expression, expressed in roots, rosette leaves, cauline leaves, stems and flowers.

Its subcellular location is the cytoplasm. The protein localises to the cytoskeleton. Functionally, binds to actin monomers and regulates the organization of the actin cytoskeleton. Can increase the critical concentration (Cc) of actin assembly in vitro. Acts as a downstream effector of the hydrogen sulfide signaling to regulate the assembly and depolymerization of F-actin. At high concentrations, profilin prevents the polymerization of actin, whereas it enhances it at low concentrations. Binding to the poly-proline motif of formin induces oligomerization of PRF3. PRF3 oligomers inhibit formin-mediated actin assembly to modulate plant immunity triggered by pathogen-associated molecular patterns (PAMPs). This chain is Profilin-3, found in Arabidopsis thaliana (Mouse-ear cress).